Reading from the N-terminus, the 460-residue chain is Inactive ubiquitin carboxyl-terminal hydrolase MINDY-4B (460 aa).

Residues 41 to 76 (TNNSTPQNHEGNHTSADENEDGTGLSQPKGQGHLPS) are disordered.

This sequence belongs to the MINDY deubiquitinase family. FAM188 subfamily.

The sequence is that of Inactive ubiquitin carboxyl-terminal hydrolase MINDY-4B from Homo sapiens (Human).